The sequence spans 361 residues: N-methyltransferase benX (361 aa).

Belongs to the methyltransferase superfamily.

It functions in the pathway secondary metabolite biosynthesis. Functionally, N-methyltransferase; part of the gene cluster that mediates the biosynthesis of benzomalvin A and D. The pathway begins with the loading of amino acid precursors onto the A domains of the non ribosomal peptide synthetases benY and benZ. BenY and the A1 domain of benZ are loaded with anthranilate (Anth), while the A2 domain of benZ is loaded with phenylalanine (Phe). N-methylation of Phe by the methyltransferase benX may happen before loading of Phe onto benZ, after loading of Phe, or after dipeptide formation. Condensation of Anth with the secondary amine of NmPhe or Phe is catalyzed by the C1 domain of benZ, forming a dipeptide intermediate. This is followed by in trans condensation of the Anth-NmPhe dipeptide with Anth bound to the T domain of benY by the C2 domain of benZ to form the linear tripeptide Anth-NmPhe-Anth. Cyclization and release of the tripeptide is then catalyzed by the C-terminal C domain of benY and the resulting 11-member macrocyclic intermediate is expected to spontaneously collapse to form the benzodiazepine core. Benzomalvin A is in conformational equilibrium with its atropisomer, benzomalvin D. The protein is N-methyltransferase benX of Aspergillus terreus.